The primary structure comprises 1077 residues: Hemoglobin and hemoglobin-haptoglobin-binding protein A (1077 aa).

An N-terminal signal peptide occupies residues 1–24 (MTNFRLNVLAYSVMLGLTASVAYA). Positions 25 to 72 (EPTNQPTNQPTNQPTNQPTNQPTNQPTNQPTNQPTNQPTNQPTNQNSN) are disordered. Repeat copies occupy residues 26–29 (PTNQ), 30–33 (PTNQ), 34–37 (PTNQ), 38–41 (PTNQ), 42–45 (PTNQ), 46–49 (PTNQ), 50–53 (PTNQ), 54–57 (PTNQ), 58–61 (PTNQ), 62–65 (PTNQ), and 66–69 (PTNQ). Residues 26-69 (PTNQPTNQPTNQPTNQPTNQPTNQPTNQPTNQPTNQPTNQPTNQ) are 11 X 4 AA tandem repeats of P-T-N-Q. Residues 26–70 (PTNQPTNQPTNQPTNQPTNQPTNQPTNQPTNQPTNQPTNQPTNQN) are compositionally biased toward low complexity. A TonB box motif is present at residues 78 to 85 (EQINVSGS). In terms of domain architecture, TBDR plug spans 89–216 (TDTKAPPKIA…LGGSVSLDTK (128 aa)). Residues 224 to 1077 (NKNYYASYKR…NYRMSVQFEF (854 aa)) enclose the TBDR beta-barrel domain. A TonB C-terminal box motif is present at residues 1060–1077 (NRFYAPERNYRMSVQFEF).

This sequence belongs to the TonB-dependent receptor family. Hemoglobin/haptoglobin binding protein subfamily.

It localises to the cell outer membrane. Acts as a receptor for hemoglobin or the hemoglobin/haptoglobin complex of the human host and is required for heme uptake. The protein is Hemoglobin and hemoglobin-haptoglobin-binding protein A (hgpA) of Haemophilus influenzae.